The sequence spans 163 residues: MHKKYFIGTSILIAVFVVIFDQVTKYIIATTMKIGDSFEVIPHFLNITSHRNNGAAWGILSGKMTFFFIITIIILIALVYFFINDAQYNLFMQVAISLLFAGALGNFIDRVLTGEVVDFIDTNIFGYDFPIFNIADSSLTIGVILIIIALLKDTSNKKEKEVK.

A run of 3 helical transmembrane segments spans residues 11-31, 64-84, and 88-108; these read ILIAVFVVIFDQVTKYIIATT, MTFFFIITIIILIALVYFFIN, and YNLFMQVAISLLFAGALGNFI. Active-site residues include D118 and D136. A helical membrane pass occupies residues 131 to 151; it reads IFNIADSSLTIGVILIIIALL.

It belongs to the peptidase A8 family.

It is found in the cell membrane. The enzyme catalyses Release of signal peptides from bacterial membrane prolipoproteins. Hydrolyzes -Xaa-Yaa-Zaa-|-(S,diacylglyceryl)Cys-, in which Xaa is hydrophobic (preferably Leu), and Yaa (Ala or Ser) and Zaa (Gly or Ala) have small, neutral side chains.. It functions in the pathway protein modification; lipoprotein biosynthesis (signal peptide cleavage). This protein specifically catalyzes the removal of signal peptides from prolipoproteins. The sequence is that of Lipoprotein signal peptidase from Staphylococcus aureus (strain bovine RF122 / ET3-1).